Consider the following 92-residue polypeptide: Conotoxin Mr15.2 (92 aa).

An N-terminal signal peptide occupies residues 1–20 (MSTLKMMLLILLLLLPMATF). The propeptide occupies 21-53 (DSDGQAIPGGGIPSAVNSRVGGDEKSGRSLEKR). The interval 30–49 (GGIPSAVNSRVGGDEKSGRS) is disordered.

Belongs to the conotoxin N superfamily. In terms of processing, contains 4 disulfide bonds. In terms of tissue distribution, expressed by the venom duct.

Its subcellular location is the secreted. This chain is Conotoxin Mr15.2, found in Conus marmoreus (Marble cone).